The following is a 268-amino-acid chain: Taurine import ATP-binding protein TauB (268 aa).

Positions 4-236 (LSINNLSMRF…LGVDSDLREV (233 aa)) constitute an ABC transporter domain. An ATP-binding site is contributed by 41-48 (GPSGCGKT).

This sequence belongs to the ABC transporter superfamily. Taurine importer (TC 3.A.1.17.1) family. In terms of assembly, the complex is composed of two ATP-binding proteins (TauB), two transmembrane proteins (TauC) and a solute-binding protein (TauA).

It localises to the cell inner membrane. The catalysed reaction is taurine(out) + ATP + H2O = taurine(in) + ADP + phosphate + H(+). Functionally, part of the ABC transporter complex TauABC involved in taurine import. Responsible for energy coupling to the transport system. The polypeptide is Taurine import ATP-binding protein TauB (Roseobacter denitrificans (strain ATCC 33942 / OCh 114) (Erythrobacter sp. (strain OCh 114))).